The sequence spans 276 residues: Rhomboid protease GlpG (276 aa).

6 consecutive transmembrane segments (helical) span residues 94–114, 142–162, 169–189, 192–212, 229–249, and 250–270; these read GPVTWVMMIACVVVFIAMQIL, ALMHFSLMHILFNLLWWWYLG, LGSGKLIVITLISALLSGYVQ, FSGPWFGGLSGVVYALMGYVW, LIIFALIWIVAGWFDLFGMSM, and ANGAHIAGLAVGLAMAFVDSL. The active-site Nucleophile is serine 201. Histidine 254 is a catalytic residue.

This sequence belongs to the peptidase S54 family.

Its subcellular location is the cell inner membrane. The enzyme catalyses Cleaves type-1 transmembrane domains using a catalytic dyad composed of serine and histidine that are contributed by different transmembrane domains.. Functionally, rhomboid-type serine protease that catalyzes intramembrane proteolysis. This is Rhomboid protease GlpG from Escherichia coli O81 (strain ED1a).